The following is a 393-amino-acid chain: Arrestin-C (393 aa).

Over residues 371–386 (FARQEDGGEEKQKALA) the composition is skewed to basic and acidic residues. Residues 371 to 393 (FARQEDGGEEKQKALAEEGDEGS) form a disordered region.

Belongs to the arrestin family. In terms of assembly, homodimer; disulfide-linked in response to retinal illumination. Interacts with CXCR4; the interaction is dependent on the C-terminal phosphorylation of CXCR4 and modulates the calcium ion mobilization activity of CXCR4.

It localises to the photoreceptor inner segment. The protein localises to the cell projection. It is found in the cilium. Its subcellular location is the photoreceptor outer segment. In terms of biological role, may play a role in an as yet undefined retina-specific signal transduction. Could bind to photoactivated-phosphorylated red/green opsins. This Ictidomys tridecemlineatus (Thirteen-lined ground squirrel) protein is Arrestin-C (ARR3).